The chain runs to 451 residues: Chromosomal replication initiator protein DnaA (451 aa).

A domain I, interacts with DnaA modulators region spans residues 1–93 (MENIDDLWNK…HNQEEEALPE (93 aa)). The disordered stretch occupies residues 88–108 (EEALPEQTPQTPPEKDVAGQS). The tract at residues 94–113 (QTPQTPPEKDVAGQSTLSQT) is domain II. Residues 114 to 330 (MLNDKYTFNT…GALIRVVAYS (217 aa)) form a domain III, AAA+ region region. Gly158, Gly160, Lys161, and Thr162 together coordinate ATP. The domain IV, binds dsDNA stretch occupies residues 331-451 (SLINQDMNAD…VQAITEQLRQ (121 aa)).

This sequence belongs to the DnaA family. As to quaternary structure, oligomerizes as a right-handed, spiral filament on DNA at oriC.

The protein resides in the cytoplasm. Its function is as follows. Plays an essential role in the initiation and regulation of chromosomal replication. ATP-DnaA binds to the origin of replication (oriC) to initiate formation of the DNA replication initiation complex once per cell cycle. Binds the DnaA box (a 9 base pair repeat at the origin) and separates the double-stranded (ds)DNA. Forms a right-handed helical filament on oriC DNA; dsDNA binds to the exterior of the filament while single-stranded (ss)DNA is stabiized in the filament's interior. The ATP-DnaA-oriC complex binds and stabilizes one strand of the AT-rich DNA unwinding element (DUE), permitting loading of DNA polymerase. After initiation quickly degrades to an ADP-DnaA complex that is not apt for DNA replication. Binds acidic phospholipids. The sequence is that of Chromosomal replication initiator protein DnaA from Shouchella clausii (strain KSM-K16) (Alkalihalobacillus clausii).